A 276-amino-acid chain; its full sequence is Dermonecrotic toxin LlSicTox-alphaIV3 (276 aa).

His-5 is a catalytic residue. Glu-25 and Asp-27 together coordinate Mg(2+). Residue His-41 is the Nucleophile of the active site. 2 cysteine pairs are disulfide-bonded: Cys-45–Cys-51 and Cys-47–Cys-192. Residue Asp-85 participates in Mg(2+) binding.

Belongs to the arthropod phospholipase D family. Class II subfamily. Mg(2+) is required as a cofactor. In terms of tissue distribution, expressed by the venom gland.

Its subcellular location is the secreted. The enzyme catalyses an N-(acyl)-sphingosylphosphocholine = an N-(acyl)-sphingosyl-1,3-cyclic phosphate + choline. It catalyses the reaction an N-(acyl)-sphingosylphosphoethanolamine = an N-(acyl)-sphingosyl-1,3-cyclic phosphate + ethanolamine. The catalysed reaction is a 1-acyl-sn-glycero-3-phosphocholine = a 1-acyl-sn-glycero-2,3-cyclic phosphate + choline. It carries out the reaction a 1-acyl-sn-glycero-3-phosphoethanolamine = a 1-acyl-sn-glycero-2,3-cyclic phosphate + ethanolamine. In terms of biological role, dermonecrotic toxins cleave the phosphodiester linkage between the phosphate and headgroup of certain phospholipids (sphingolipid and lysolipid substrates), forming an alcohol (often choline) and a cyclic phosphate. This toxin acts on sphingomyelin (SM). It may also act on ceramide phosphoethanolamine (CPE), lysophosphatidylcholine (LPC) and lysophosphatidylethanolamine (LPE), but not on lysophosphatidylserine (LPS), and lysophosphatidylglycerol (LPG). It acts by transphosphatidylation, releasing exclusively cyclic phosphate products as second products. Induces dermonecrosis, hemolysis, increased vascular permeability, edema, inflammatory response, and platelet aggregation. The polypeptide is Dermonecrotic toxin LlSicTox-alphaIV3 (Loxosceles laeta (South American recluse spider)).